Here is an 873-residue protein sequence, read N- to C-terminus: Bifunctional heparan sulfate N-deacetylase/N-sulfotransferase 3 (873 aa).

Residues 1–13 lie on the Cytoplasmic side of the membrane; sequence MSFIMKLHRHFQR. The helical; Signal-anchor for type II membrane protein transmembrane segment at 14–34 threads the bilayer; the sequence is TVILLATFCMVSIIISAYYLY. Residues 35–873 are Lumenal-facing; it reads SGYKQENELS…WLRQELQKVR (839 aa). The heparan sulfate N-deacetylase 3 stretch occupies residues 36–589; the sequence is GYKQENELSE…KRHRDIWSKE (554 aa). N-linked (GlcNAc...) asparagine glycans are attached at residues Asn-146, Asn-226, Asn-342, and Asn-392. A heparan sulfate N-sulfotransferase 3 region spans residues 590–873; sequence KTCDRLPKFL…WLRQELQKVR (284 aa). The active-site For sulfotransferase activity is Lys-605. 605–609 contacts 3'-phosphoadenylyl sulfate; sequence KTGTT. N-linked (GlcNAc...) asparagine glycosylation occurs at Asn-658. Ser-703 contributes to the 3'-phosphoadenylyl sulfate binding site. A glycan (N-linked (GlcNAc...) asparagine) is linked at Asn-794. A disulfide bond links Cys-809 and Cys-819. Residue 824-828 coordinates 3'-phosphoadenylyl sulfate; the sequence is KGRKY.

Belongs to the sulfotransferase 1 family. NDST subfamily. As to quaternary structure, monomer. Expressed in brain, kidney, liver, fetal and adult lung, adult pancreas, placenta, fetal spleen and fetal thymus. Not detected in adult/ fetal heart and skeletal muscle.

The protein localises to the golgi apparatus membrane. It catalyses the reaction alpha-D-glucosaminyl-[heparan sulfate](n) + 3'-phosphoadenylyl sulfate = N-sulfo-alpha-D-glucosaminyl-[heparan sulfate](n) + adenosine 3',5'-bisphosphate + 2 H(+). It functions in the pathway glycan metabolism; heparan sulfate biosynthesis. The protein operates within glycan metabolism; heparin biosynthesis. Essential bifunctional enzyme that catalyzes both the N-deacetylation and the N-sulfation of glucosamine (GlcNAc) of the glycosaminoglycan in heparan sulfate. Modifies the GlcNAc-GlcA disaccharide repeating sugar backbone to make N-sulfated heparosan, a prerequisite substrate for later modifications in heparin biosynthesis. Has high deacetylase activity but low sulfotransferase activity. This chain is Bifunctional heparan sulfate N-deacetylase/N-sulfotransferase 3, found in Homo sapiens (Human).